Consider the following 89-residue polypeptide: MANIKSAKKRAKQTIVRNERNTGQRSMLRTAVKKVIKALDANDAAGAEAAFAVAQPILDRFSARGLIHKNKAARHKSRLTARIKAIKAA.

Residues 1–12 (MANIKSAKKRAK) show a composition bias toward basic residues. The segment at 1-22 (MANIKSAKKRAKQTIVRNERNT) is disordered.

The protein belongs to the bacterial ribosomal protein bS20 family.

Functionally, binds directly to 16S ribosomal RNA. The polypeptide is Small ribosomal subunit protein bS20 (Xanthomonas oryzae pv. oryzae (strain KACC10331 / KXO85)).